Consider the following 447-residue polypeptide: N-succinylarginine dihydrolase (447 aa).

Residues 19-28, Asn110, and 137-138 each bind substrate; these read AGLSFGNEAS and HR. The active site involves Glu174. Arg213 contacts substrate. His249 is a catalytic residue. Asp251 and Asn364 together coordinate substrate. Catalysis depends on Cys370, which acts as the Nucleophile.

The protein belongs to the succinylarginine dihydrolase family. Homodimer.

The catalysed reaction is N(2)-succinyl-L-arginine + 2 H2O + 2 H(+) = N(2)-succinyl-L-ornithine + 2 NH4(+) + CO2. It participates in amino-acid degradation; L-arginine degradation via AST pathway; L-glutamate and succinate from L-arginine: step 2/5. In terms of biological role, catalyzes the hydrolysis of N(2)-succinylarginine into N(2)-succinylornithine, ammonia and CO(2). This chain is N-succinylarginine dihydrolase, found in Yersinia enterocolitica serotype O:8 / biotype 1B (strain NCTC 13174 / 8081).